Here is a 479-residue protein sequence, read N- to C-terminus: Serine carboxypeptidase-like 29 (479 aa).

The N-terminal stretch at 1–28 (MAKTRGSCCLVNALIAIAFLATAHLCEA) is a signal peptide. N-linked (GlcNAc...) asparagine glycans are attached at residues Asn47 and Asn144. Cystine bridges form between Cys93–Cys349, Cys254–Cys266, and Cys290–Cys317. Ser186 is a catalytic residue. N-linked (GlcNAc...) asparagine glycosylation occurs at Asn293. Active-site residues include Asp386 and His438.

It belongs to the peptidase S10 family. In terms of tissue distribution, expressed in seedlings, roots, leaves and flowers.

It localises to the secreted. In terms of biological role, probable carboxypeptidase. The sequence is that of Serine carboxypeptidase-like 29 (SCPL29) from Arabidopsis thaliana (Mouse-ear cress).